We begin with the raw amino-acid sequence, 223 residues long: Fibronectin type III domain-containing protein 10 (223 aa).

The N-terminal stretch at 1–19 (MRAPPLLLLLAACAPPSGA) is a signal peptide. The Extracellular portion of the chain corresponds to 20-179 (AVDPTPPGWE…FTAEPAAMQE (160 aa)). A Fibronectin type-III domain is found at 72–168 (LASAGGSLRA…VVPPELAECV (97 aa)). N-linked (GlcNAc...) asparagine glycosylation is found at Asn86 and Asn109. The helical transmembrane segment at 180 to 200 (IVVAMTAVGGSICVMLVVICL) threads the bilayer. At 201 to 223 (LVAYITENLMHPTFRRPSLRRQP) the chain is on the cytoplasmic side.

It is found in the membrane. The protein is Fibronectin type III domain-containing protein 10 (Fndc10) of Mus musculus (Mouse).